Reading from the N-terminus, the 103-residue chain is Small ribosomal subunit protein uS10 (103 aa).

It belongs to the universal ribosomal protein uS10 family. Part of the 30S ribosomal subunit.

Its function is as follows. Involved in the binding of tRNA to the ribosomes. The polypeptide is Small ribosomal subunit protein uS10 (Polynucleobacter necessarius subsp. necessarius (strain STIR1)).